Here is a 300-residue protein sequence, read N- to C-terminus: tRNA-cytidine(32) 2-sulfurtransferase (300 aa).

The PP-loop motif motif lies at 57-62 (SGGKDS). [4Fe-4S] cluster-binding residues include Cys-132, Cys-135, and Cys-223.

It belongs to the TtcA family. As to quaternary structure, homodimer. The cofactor is Mg(2+). Requires [4Fe-4S] cluster as cofactor.

It is found in the cytoplasm. The enzyme catalyses cytidine(32) in tRNA + S-sulfanyl-L-cysteinyl-[cysteine desulfurase] + AH2 + ATP = 2-thiocytidine(32) in tRNA + L-cysteinyl-[cysteine desulfurase] + A + AMP + diphosphate + H(+). It functions in the pathway tRNA modification. In terms of biological role, catalyzes the ATP-dependent 2-thiolation of cytidine in position 32 of tRNA, to form 2-thiocytidine (s(2)C32). The sulfur atoms are provided by the cysteine/cysteine desulfurase (IscS) system. The chain is tRNA-cytidine(32) 2-sulfurtransferase from Xanthomonas campestris pv. campestris (strain B100).